A 482-amino-acid chain; its full sequence is Ribulose bisphosphate carboxylase large chain (482 aa).

Residues methionine 1–serine 2 constitute a propeptide that is removed on maturation. An N-acetylproline modification is found at proline 3. Position 14 is an N6,N6,N6-trimethyllysine (lysine 14). Substrate contacts are provided by asparagine 123 and threonine 173. Residue lysine 175 is the Proton acceptor of the active site. Lysine 177 serves as a coordination point for substrate. Residues lysine 201, aspartate 203, and glutamate 204 each contribute to the Mg(2+) site. At lysine 201 the chain carries N6-carboxylysine. Catalysis depends on histidine 294, which acts as the Proton acceptor. Positions 295, 327, and 379 each coordinate substrate.

It belongs to the RuBisCO large chain family. Type I subfamily. In terms of assembly, heterohexadecamer of 8 large chains and 8 small chains; disulfide-linked. The disulfide link is formed within the large subunit homodimers. It depends on Mg(2+) as a cofactor. Post-translationally, the disulfide bond which can form in the large chain dimeric partners within the hexadecamer appears to be associated with oxidative stress and protein turnover.

It is found in the plastid. Its subcellular location is the chloroplast. The catalysed reaction is 2 (2R)-3-phosphoglycerate + 2 H(+) = D-ribulose 1,5-bisphosphate + CO2 + H2O. The enzyme catalyses D-ribulose 1,5-bisphosphate + O2 = 2-phosphoglycolate + (2R)-3-phosphoglycerate + 2 H(+). In terms of biological role, ruBisCO catalyzes two reactions: the carboxylation of D-ribulose 1,5-bisphosphate, the primary event in carbon dioxide fixation, as well as the oxidative fragmentation of the pentose substrate in the photorespiration process. Both reactions occur simultaneously and in competition at the same active site. The protein is Ribulose bisphosphate carboxylase large chain of Stegnosperma halimifolium.